We begin with the raw amino-acid sequence, 593 residues long: NADH-quinone oxidoreductase subunit C/D (593 aa).

The segment at 1–184 (MTADNAIFIP…DPYSLTLAKQ (184 aa)) is NADH dehydrogenase I subunit C. Positions 208–593 (DYMFLNLGPN…IDFVMADVDR (386 aa)) are NADH dehydrogenase I subunit D.

This sequence in the N-terminal section; belongs to the complex I 30 kDa subunit family. In the C-terminal section; belongs to the complex I 49 kDa subunit family. NDH-1 is composed of 13 different subunits. Subunits NuoB, CD, E, F, and G constitute the peripheral sector of the complex.

The protein resides in the cell inner membrane. The catalysed reaction is a quinone + NADH + 5 H(+)(in) = a quinol + NAD(+) + 4 H(+)(out). NDH-1 shuttles electrons from NADH, via FMN and iron-sulfur (Fe-S) centers, to quinones in the respiratory chain. The immediate electron acceptor for the enzyme in this species is believed to be ubiquinone. Couples the redox reaction to proton translocation (for every two electrons transferred, four hydrogen ions are translocated across the cytoplasmic membrane), and thus conserves the redox energy in a proton gradient. The sequence is that of NADH-quinone oxidoreductase subunit C/D from Pseudomonas putida (strain ATCC 700007 / DSM 6899 / JCM 31910 / BCRC 17059 / LMG 24140 / F1).